The following is a 277-amino-acid chain: Eukaryotic translation initiation factor 3 subunit J (277 aa).

Positions 1–80 are disordered; the sequence is MSWDDEDFAV…PAATKNTMLD (80 aa). Positions 23 to 43 are enriched in acidic residues; that stretch reads WDDEFAENDDEPVLESWEDEE. A compositionally biased stretch (low complexity) spans 50 to 75; it reads KAAAAAAAKAPKKASPSPAATPAATK. A coiled-coil region spans residues 199-230; that stretch reads TVENIRQTIATLNVLMKDKEREERQARLAKVK. Residues 257 to 277 form a disordered region; sequence DNDFDLGGNDNFDDFGEDDFM. Residues 267-277 show a composition bias toward acidic residues; that stretch reads NFDDFGEDDFM.

This sequence belongs to the eIF-3 subunit J family. In terms of assembly, component of the eukaryotic translation initiation factor 3 (eIF-3) complex.

Its subcellular location is the cytoplasm. Its function is as follows. Component of the eukaryotic translation initiation factor 3 (eIF-3) complex, which is involved in protein synthesis of a specialized repertoire of mRNAs and, together with other initiation factors, stimulates binding of mRNA and methionyl-tRNAi to the 40S ribosome. The eIF-3 complex specifically targets and initiates translation of a subset of mRNAs involved in cell proliferation. The protein is Eukaryotic translation initiation factor 3 subunit J of Kluyveromyces lactis (strain ATCC 8585 / CBS 2359 / DSM 70799 / NBRC 1267 / NRRL Y-1140 / WM37) (Yeast).